Reading from the N-terminus, the 202-residue chain is Small ribosomal subunit protein uS4 (202 aa).

Basic residues predominate over residues 1–13 (MSRYRGPRLRITR). The tract at residues 1–43 (MSRYRGPRLRITRRLGDLPGLTRKAAKRSHPPGQHGQARRKRS) is disordered. In terms of domain architecture, S4 RNA-binding spans 90–152 (NRLDNVCFRL…KASKQLAQAN (63 aa)).

This sequence belongs to the universal ribosomal protein uS4 family. Part of the 30S ribosomal subunit. Contacts protein S5. The interaction surface between S4 and S5 is involved in control of translational fidelity.

In terms of biological role, one of the primary rRNA binding proteins, it binds directly to 16S rRNA where it nucleates assembly of the body of the 30S subunit. With S5 and S12 plays an important role in translational accuracy. This chain is Small ribosomal subunit protein uS4, found in Prochlorococcus marinus (strain NATL2A).